Reading from the N-terminus, the 98-residue chain is uncharacterized protein (98 aa).

Its subcellular location is the cytoplasm. This is an uncharacterized protein from Saccharomyces cerevisiae (strain ATCC 204508 / S288c) (Baker's yeast).